We begin with the raw amino-acid sequence, 391 residues long: Multidrug resistance protein MdtL (391 aa).

Helical transmembrane passes span 4 to 24 (FLIC…MYLV), 42 to 62 (IAFS…GKVA), 69 to 89 (PVAI…SLAE), 93 to 113 (LFLA…VVAF), 134 to 154 (GITC…MLNF), 158 to 178 (SLFW…LFIL), 203 to 222 (FFLS…LTFV), 245 to 265 (ALTA…LGIF), 269 to 289 (TLMI…AVSP), 293 to 313 (VSLF…GVAM), 331 to 351 (LGIA…VVGI), and 356 to 376 (MLIG…MFVA).

It belongs to the major facilitator superfamily. DHA1 family. MdtL (TC 2.A.1.2.22) subfamily.

It localises to the cell inner membrane. Functionally, confers resistance to chloramphenicol. This Escherichia coli O81 (strain ED1a) protein is Multidrug resistance protein MdtL.